The chain runs to 572 residues: MRTSQYLLSTLKETPADAEVISHQLMLRAGMIRKLASGLYTWLPTGVRVLKKVENIVREEMNNAGAIEVSMPVVQPADLWQESGRWEQYGPELLRFVDRGERPFVLGPTHEEVITDLIRNELSSYKQLPLNFYQIQTKFRDEVRPRFGVMRSREFLMKDAYSFHTSQESLQETYDAMYAAYSKIFSRMGLDFRAVQADTGSIGGSASHEFQVLAQSGEDDVVFSDTSDYAANIELAEAIAPKEPRAAATQEMTLVDTPNAKTIAELVEQFNLPIEKTVKTLLVKAVEGSSFPQVALLVRGDHELNEVKAEKLPQVASPLTFATEEEIRAVVKAGPGSLGPVNMPIPVVIDRTVAAMSDFAAGANIDGKHYFGINWDRDVATPEVADIRNVVAGDPSPDGQGRLLIKRGIEVGHIFQLGTKYSEALKASVQGEDGRNQILTMGCYGIGVTRVVAAAIEQNYDERGIVWPDAIAPFQVAILPMNMHKSFRVQELAEKLYSELRAQGIEVLLDDRKERPGVMFADMELIGIPHTIVLGDRNLDNDDIEYKYRRNGEKQLIKTGDIVEYLVKQIKG.

This sequence belongs to the class-II aminoacyl-tRNA synthetase family. ProS type 1 subfamily. In terms of assembly, homodimer.

It localises to the cytoplasm. It carries out the reaction tRNA(Pro) + L-proline + ATP = L-prolyl-tRNA(Pro) + AMP + diphosphate. In terms of biological role, catalyzes the attachment of proline to tRNA(Pro) in a two-step reaction: proline is first activated by ATP to form Pro-AMP and then transferred to the acceptor end of tRNA(Pro). As ProRS can inadvertently accommodate and process non-cognate amino acids such as alanine and cysteine, to avoid such errors it has two additional distinct editing activities against alanine. One activity is designated as 'pretransfer' editing and involves the tRNA(Pro)-independent hydrolysis of activated Ala-AMP. The other activity is designated 'posttransfer' editing and involves deacylation of mischarged Ala-tRNA(Pro). The misacylated Cys-tRNA(Pro) is not edited by ProRS. The chain is Proline--tRNA ligase from Escherichia coli (strain K12 / MC4100 / BW2952).